Reading from the N-terminus, the 315-residue chain is Thioredoxin reductase (315 aa).

45-52 (EGSTPGGK) lines the FAD pocket. A disulfide bond links Cys-145 and Cys-148. 288–297 (DCRSKHFRQI) is a binding site for FAD.

Belongs to the class-II pyridine nucleotide-disulfide oxidoreductase family. Homodimer. FAD is required as a cofactor.

Its subcellular location is the cytoplasm. The enzyme catalyses [thioredoxin]-dithiol + NADP(+) = [thioredoxin]-disulfide + NADPH + H(+). This chain is Thioredoxin reductase (trxB), found in Mycoplasma pneumoniae (strain ATCC 29342 / M129 / Subtype 1) (Mycoplasmoides pneumoniae).